The primary structure comprises 424 residues: Calreticulin-2 (424 aa).

The N-terminal stretch at 1-22 (MAKMIPSLVSLILIGLVAIASA) is a signal peptide. An N-linked (GlcNAc...) asparagine glycan is attached at N59. A disulfide bond links C108 and C140. 4 residues coordinate an alpha-D-glucoside: Y112, K114, Y131, and D138. A run of 7 repeats spans residues 194–205 (KQTGSLYSDWDL), 213–224 (DPSAKKPEDWDE), 230–241 (DPEDKKPDGYDD), 248–259 (DTDSKKPEDWDD), 263–273 (GEWTAPTIPNP), 277–287 (GEWKPKQIKNP), and 291–301 (GKWEAPLIDNP). The interval 194–259 (KQTGSLYSDW…DSKKPEDWDD (66 aa)) is 4 X approximate repeats. Residues 210–220 (KIKDPSAKKPE) show a composition bias toward basic and acidic residues. A disordered region spans residues 210–279 (KIKDPSAKKP…IPNPEYMGEW (70 aa)). A compositionally biased stretch (acidic residues) spans 221–230 (DWDEQEYISD). A compositionally biased stretch (basic and acidic residues) spans 231-255 (PEDKKPDGYDDIPKEIPDTDSKKPE). Residues 263–301 (GEWTAPTIPNPEYMGEWKPKQIKNPNYKGKWEAPLIDNP) are 3 X approximate repeats. E321 is a binding site for an alpha-D-glucoside. Residues 362–378 (FDEAEKKNEEEESKDAP) show a composition bias toward basic and acidic residues. The disordered stretch occupies residues 362 to 424 (FDEAEKKNEE…EKDATAHDEL (63 aa)). Acidic residues predominate over residues 379-397 (AESDAEDEPEDDEGGDDSD). S381 and S396 each carry phosphoserine. Positions 398–424 (SESKAEETKSVDSEETSEKDATAHDEL) are enriched in basic and acidic residues. The Prevents secretion from ER motif lies at 421–424 (HDEL).

The protein belongs to the calreticulin family.

It is found in the endoplasmic reticulum lumen. Functionally, molecular calcium-binding chaperone promoting folding, oligomeric assembly and quality control in the ER via the calreticulin/calnexin cycle. This lectin may interact transiently with almost all of the monoglucosylated glycoproteins that are synthesized in the ER. The protein is Calreticulin-2 (CRT2) of Arabidopsis thaliana (Mouse-ear cress).